A 965-amino-acid polypeptide reads, in one-letter code: Translation initiation factor IF-2 (965 aa).

Residues Arg-94–Phe-375 form a disordered region. A compositionally biased stretch (low complexity) spans Glu-104–Glu-115. The segment covering Glu-121–Lys-177 has biased composition (basic and acidic residues). Over residues Ala-181–Arg-191 the composition is skewed to low complexity. The segment covering Glu-192–Arg-253 has biased composition (basic and acidic residues). Pro residues predominate over residues Pro-267–Ala-276. A compositionally biased stretch (low complexity) spans Lys-303–Ala-320. Gly residues predominate over residues Thr-351–Lys-364. The tr-type G domain maps to Pro-465–Lys-634. Residues Gly-474 to Thr-481 form a G1 region. Gly-474–Thr-481 lines the GTP pocket. The tract at residues Gly-499–His-503 is G2. The tract at residues Asp-520–Gly-523 is G3. GTP contacts are provided by residues Asp-520–His-524 and Asn-574–Asp-577. The G4 stretch occupies residues Asn-574 to Asp-577. A G5 region spans residues Ser-610–Lys-612.

Belongs to the TRAFAC class translation factor GTPase superfamily. Classic translation factor GTPase family. IF-2 subfamily.

The protein localises to the cytoplasm. In terms of biological role, one of the essential components for the initiation of protein synthesis. Protects formylmethionyl-tRNA from spontaneous hydrolysis and promotes its binding to the 30S ribosomal subunits. Also involved in the hydrolysis of GTP during the formation of the 70S ribosomal complex. The polypeptide is Translation initiation factor IF-2 (Paraburkholderia phymatum (strain DSM 17167 / CIP 108236 / LMG 21445 / STM815) (Burkholderia phymatum)).